The sequence spans 362 residues: UDP-N-acetylglucosamine--N-acetylmuramyl-(pentapeptide) pyrophosphoryl-undecaprenol N-acetylglucosamine transferase (362 aa).

UDP-N-acetyl-alpha-D-glucosamine contacts are provided by residues 14 to 16, N122, R163, S190, and Q285; that span reads TGG.

This sequence belongs to the glycosyltransferase 28 family. MurG subfamily.

The protein resides in the cell inner membrane. The catalysed reaction is di-trans,octa-cis-undecaprenyl diphospho-N-acetyl-alpha-D-muramoyl-L-alanyl-D-glutamyl-meso-2,6-diaminopimeloyl-D-alanyl-D-alanine + UDP-N-acetyl-alpha-D-glucosamine = di-trans,octa-cis-undecaprenyl diphospho-[N-acetyl-alpha-D-glucosaminyl-(1-&gt;4)]-N-acetyl-alpha-D-muramoyl-L-alanyl-D-glutamyl-meso-2,6-diaminopimeloyl-D-alanyl-D-alanine + UDP + H(+). Its pathway is cell wall biogenesis; peptidoglycan biosynthesis. Cell wall formation. Catalyzes the transfer of a GlcNAc subunit on undecaprenyl-pyrophosphoryl-MurNAc-pentapeptide (lipid intermediate I) to form undecaprenyl-pyrophosphoryl-MurNAc-(pentapeptide)GlcNAc (lipid intermediate II). The polypeptide is UDP-N-acetylglucosamine--N-acetylmuramyl-(pentapeptide) pyrophosphoryl-undecaprenol N-acetylglucosamine transferase (Prochlorococcus marinus (strain MIT 9215)).